Reading from the N-terminus, the 977-residue chain is 2-oxoglutarate dehydrogenase E1 component (977 aa).

The RPE1 insert domain maps to 77 to 125 (VLNNRHLAKPAYREEFKGDTERSTAAYIDIREDASTGSTSKLPLEAKFG).

The protein belongs to the alpha-ketoglutarate dehydrogenase family. Homodimer. Part of the 2-oxoglutarate dehydrogenase (OGDH) complex composed of E1 (2-oxoglutarate dehydrogenase), E2 (dihydrolipoamide succinyltransferase) and E3 (dihydrolipoamide dehydrogenase); the complex contains multiple copies of the three enzymatic components (E1, E2 and E3). Requires thiamine diphosphate as cofactor.

It carries out the reaction N(6)-[(R)-lipoyl]-L-lysyl-[protein] + 2-oxoglutarate + H(+) = N(6)-[(R)-S(8)-succinyldihydrolipoyl]-L-lysyl-[protein] + CO2. E1 component of the 2-oxoglutarate dehydrogenase (OGDH) complex which catalyzes the decarboxylation of 2-oxoglutarate, the first step in the conversion of 2-oxoglutarate to succinyl-CoA and CO(2). In Rickettsia felis (strain ATCC VR-1525 / URRWXCal2) (Rickettsia azadi), this protein is 2-oxoglutarate dehydrogenase E1 component (sucA).